Reading from the N-terminus, the 202-residue chain is ATP-dependent Clp protease proteolytic subunit (202 aa).

Residue Ser106 is the Nucleophile of the active site. Residue His131 is part of the active site.

This sequence belongs to the peptidase S14 family. As to quaternary structure, fourteen ClpP subunits assemble into 2 heptameric rings which stack back to back to give a disk-like structure with a central cavity, resembling the structure of eukaryotic proteasomes.

The protein localises to the cytoplasm. It catalyses the reaction Hydrolysis of proteins to small peptides in the presence of ATP and magnesium. alpha-casein is the usual test substrate. In the absence of ATP, only oligopeptides shorter than five residues are hydrolyzed (such as succinyl-Leu-Tyr-|-NHMec, and Leu-Tyr-Leu-|-Tyr-Trp, in which cleavage of the -Tyr-|-Leu- and -Tyr-|-Trp bonds also occurs).. Functionally, cleaves peptides in various proteins in a process that requires ATP hydrolysis. Has a chymotrypsin-like activity. Plays a major role in the degradation of misfolded proteins. The polypeptide is ATP-dependent Clp protease proteolytic subunit (Paracidovorax citrulli (strain AAC00-1) (Acidovorax citrulli)).